A 310-amino-acid chain; its full sequence is Proline iminopeptidase (310 aa).

Residues 41–288 (LVTLHGGPGG…NSSHMAMWEE (248 aa)) form the AB hydrolase-1 domain. Catalysis depends on S116, which acts as the Nucleophile. D255 is a catalytic residue. The active-site Proton donor is H282.

This sequence belongs to the peptidase S33 family. Part of the tricorn proteolytic complex.

The enzyme catalyses Release of N-terminal proline from a peptide.. Its function is as follows. Cleaves H-Pro-AMC as well as a wide spectrum of amino acid substrates and several peptide substrates without a proline at the N-terminus. In conjunction with the three factors F1, F2 and F3, Tricorn degrades oligopeptides in a sequential manner, yielding free amino acids. The chain is Proline iminopeptidase (pip) from Saccharolobus solfataricus (strain ATCC 35092 / DSM 1617 / JCM 11322 / P2) (Sulfolobus solfataricus).